The primary structure comprises 476 residues: Bifunctional protein HldE (476 aa).

The ribokinase stretch occupies residues methionine 1–threonine 318. Asparagine 195 to glutamate 198 provides a ligand contact to ATP. Aspartate 264 is an active-site residue. A cytidylyltransferase region spans residues methionine 344–glycine 476.

This sequence in the N-terminal section; belongs to the carbohydrate kinase PfkB family. It in the C-terminal section; belongs to the cytidylyltransferase family. In terms of assembly, homodimer.

It carries out the reaction D-glycero-beta-D-manno-heptose 7-phosphate + ATP = D-glycero-beta-D-manno-heptose 1,7-bisphosphate + ADP + H(+). The enzyme catalyses D-glycero-beta-D-manno-heptose 1-phosphate + ATP + H(+) = ADP-D-glycero-beta-D-manno-heptose + diphosphate. It participates in nucleotide-sugar biosynthesis; ADP-L-glycero-beta-D-manno-heptose biosynthesis; ADP-L-glycero-beta-D-manno-heptose from D-glycero-beta-D-manno-heptose 7-phosphate: step 1/4. It functions in the pathway nucleotide-sugar biosynthesis; ADP-L-glycero-beta-D-manno-heptose biosynthesis; ADP-L-glycero-beta-D-manno-heptose from D-glycero-beta-D-manno-heptose 7-phosphate: step 3/4. Functionally, catalyzes the phosphorylation of D-glycero-D-manno-heptose 7-phosphate at the C-1 position to selectively form D-glycero-beta-D-manno-heptose-1,7-bisphosphate. Catalyzes the ADP transfer from ATP to D-glycero-beta-D-manno-heptose 1-phosphate, yielding ADP-D-glycero-beta-D-manno-heptose. The sequence is that of Bifunctional protein HldE from Vibrio cholerae serotype O1 (strain M66-2).